A 448-amino-acid polypeptide reads, in one-letter code: UDP-N-acetylmuramoylalanine--D-glutamate ligase (448 aa).

5 residues coordinate UDP-N-acetyl-alpha-D-muramoyl-L-alanine: lysine 17, serine 18, threonine 38, arginine 39, and glycine 78. 116–122 (GSNAKST) provides a ligand contact to ATP. Positions 119, 120, 121, and 122 each coordinate ADP. The UDP-N-acetyl-alpha-D-muramoyl-L-alanine site is built by asparagine 143 and histidine 188. ADP-binding residues include asparagine 278, arginine 309, aspartate 324, and lysine 326.

This sequence belongs to the MurCDEF family.

The protein resides in the cytoplasm. The enzyme catalyses UDP-N-acetyl-alpha-D-muramoyl-L-alanine + D-glutamate + ATP = UDP-N-acetyl-alpha-D-muramoyl-L-alanyl-D-glutamate + ADP + phosphate + H(+). Its pathway is cell wall biogenesis; peptidoglycan biosynthesis. In terms of biological role, involved in cell wall formation. Catalyzes the addition of D-glutamate to the peptidoglycan precursor UDP-N-acetylmuramoyl-L-alanine (UMA). The chain is UDP-N-acetylmuramoylalanine--D-glutamate ligase from Pseudomonas aeruginosa (strain ATCC 15692 / DSM 22644 / CIP 104116 / JCM 14847 / LMG 12228 / 1C / PRS 101 / PAO1).